The primary structure comprises 489 residues: 2-(3-amino-3-carboxypropyl)histidine synthase subunit 2 (489 aa).

Met-1 is modified (N-acetylmethionine). Phosphoserine is present on Ser-7. Cys-89, Cys-110, and Cys-341 together coordinate [4Fe-4S] cluster. Thr-435 carries the phosphothreonine modification. Phosphoserine is present on residues Ser-446 and Ser-456. Phosphothreonine is present on Thr-467. A Phosphoserine modification is found at Ser-488.

It belongs to the DPH1/DPH2 family. DPH2 subfamily. In terms of assembly, component of the 2-(3-amino-3-carboxypropyl)histidine synthase complex composed of DPH1, DPH2, DPH3 and a NADH-dependent reductase. Interacts with DPH1. Requires [4Fe-4S] cluster as cofactor. As to expression, strongly expressed in skeletal muscle. Moderately expressed in heart, small intestine, liver, pancreas, testis and colon. Weakly expressed in brain, placenta, kidney, spleen, thymus, prostate, ovary and lymphocytes.

Its pathway is protein modification; peptidyl-diphthamide biosynthesis. Its function is as follows. Required for the first step of diphthamide biosynthesis, a post-translational modification of histidine which occurs in elongation factor 2. DPH1 and DPH2 transfer a 3-amino-3-carboxypropyl (ACP) group from S-adenosyl-L-methionine (SAM) to a histidine residue, the reaction is assisted by a reduction system comprising DPH3 and a NADH-dependent reductase. Facilitates the reduction of the catalytic iron-sulfur cluster found in the DPH1 subunit. The sequence is that of 2-(3-amino-3-carboxypropyl)histidine synthase subunit 2 (DPH2) from Homo sapiens (Human).